We begin with the raw amino-acid sequence, 368 residues long: tRNA/tmRNA (uracil-C(5))-methyltransferase (368 aa).

5 residues coordinate S-adenosyl-L-methionine: Gln190, Tyr218, Asn223, Glu239, and Asp301. Cys326 (nucleophile) is an active-site residue. The active-site Proton acceptor is Glu360.

It belongs to the class I-like SAM-binding methyltransferase superfamily. RNA M5U methyltransferase family. TrmA subfamily.

It catalyses the reaction uridine(54) in tRNA + S-adenosyl-L-methionine = 5-methyluridine(54) in tRNA + S-adenosyl-L-homocysteine + H(+). The catalysed reaction is uridine(341) in tmRNA + S-adenosyl-L-methionine = 5-methyluridine(341) in tmRNA + S-adenosyl-L-homocysteine + H(+). In terms of biological role, dual-specificity methyltransferase that catalyzes the formation of 5-methyluridine at position 54 (m5U54) in all tRNAs, and that of position 341 (m5U341) in tmRNA (transfer-mRNA). This chain is tRNA/tmRNA (uracil-C(5))-methyltransferase, found in Aliivibrio salmonicida (strain LFI1238) (Vibrio salmonicida (strain LFI1238)).